Reading from the N-terminus, the 114-residue chain is Circadian clock oscillator protein KaiB (114 aa).

It belongs to the KaiB family. In terms of assembly, may undergo a major conformational rearrangment; in the free state forms homooligomers. When bound to KaiC switches to a monomeric thioredoxin-fold (KaiB(fs)). The active oscillator complex is probably KaiC(6):KaiB(6).

Its function is as follows. Component of the KaiBC clock protein complex, which constitutes the main circadian regulator in cyanobacteria; it may modify the ATPase activity of KaiC. In terms of biological role, may be a metamorphic protein which reversibly switches between an inactive tetrameric fold and a rare, thioredoxin-like monomeric fold (KaiB(fs)). KaiB(fs) binds phospho-KaiC, and perhaps clock output effectors. This is Circadian clock oscillator protein KaiB from Prochlorococcus marinus (strain MIT 9211).